Reading from the N-terminus, the 116-residue chain is MEVEILDQRDNPLLYRKEVKFVVRHEDSGTPQKSEVLRKLAAILDVDKEVVLIDRMESEFGKRETKGYAKIYKSMEHLEDIEPEHMVERHKKVLEELESESEESEESESEESEEEE.

The tract at residues 81–116 (IEPEHMVERHKKVLEELESESEESEESESEESEEEE) is disordered. A compositionally biased stretch (acidic residues) spans 96–116 (ELESESEESEESESEESEEEE).

It belongs to the eukaryotic ribosomal protein eS24 family.

This Methanopyrus kandleri (strain AV19 / DSM 6324 / JCM 9639 / NBRC 100938) protein is Small ribosomal subunit protein eS24.